Consider the following 174-residue polypeptide: NADH-quinone oxidoreductase subunit B 1 (174 aa).

The [4Fe-4S] cluster site is built by Cys-38, Cys-39, Cys-104, and Cys-133.

It belongs to the complex I 20 kDa subunit family. In terms of assembly, NDH-1 is composed of 14 different subunits. Subunits NuoB, C, D, E, F, and G constitute the peripheral sector of the complex. [4Fe-4S] cluster is required as a cofactor.

The protein localises to the cell membrane. The enzyme catalyses a quinone + NADH + 5 H(+)(in) = a quinol + NAD(+) + 4 H(+)(out). NDH-1 shuttles electrons from NADH, via FMN and iron-sulfur (Fe-S) centers, to quinones in the respiratory chain. The immediate electron acceptor for the enzyme in this species is believed to be ubiquinone. Couples the redox reaction to proton translocation (for every two electrons transferred, four hydrogen ions are translocated across the cytoplasmic membrane), and thus conserves the redox energy in a proton gradient. The sequence is that of NADH-quinone oxidoreductase subunit B 1 from Chloroflexus aggregans (strain MD-66 / DSM 9485).